A 473-amino-acid polypeptide reads, in one-letter code: MASEVSVASSGSEHSGAQKCPFQDPGLSSMDQDSRLRDILSRFNREKIPERAVHARGAGAYGEFEVTHDVSDICDIDMLLGVGKKTPCVVRFSTTTLERGSAESVRDVKGMAIKHFTQDGNWDWVCLNIPMFFIRDPSKFPDMVHAQRPDPTTNVANPSRWWEFVCNNHETLHMVMFQFSDFGTMFDYRSMSGYAAHAYKWVMPDGSWKYVHWFLASDQGPNFETGHQAKQIGADDAESATRDLYQSLERGEYPSWTVKVQVVDPEDAPKLPFNILDVTKHWNLGNYPPDIDVIPGRTLGKLTLKKEPQDYFEEIEQLAFSPSRLVHGVEASEDPMLQARLFAYPDAQKHRLGPNNLDLPANRTKKFADGARPEKAEMAPQKVPSQEHADWVSQVKSSSWSEPNETDYKFPREFWKALPRLRGEAFQNSLVVNMAKSVSQVPVDMREKVYSTLALIADDLADRVRTMTEEIVE.

Low complexity predominate over residues 1 to 15 (MASEVSVASSGSEHS). The tract at residues 1 to 31 (MASEVSVASSGSEHSGAQKCPFQDPGLSSMD) is disordered. The active site involves histidine 54. Tyrosine 344 provides a ligand contact to heme. The tract at residues 369–388 (DGARPEKAEMAPQKVPSQEH) is disordered.

It belongs to the catalase family. The cofactor is heme.

Its pathway is alkaloid biosynthesis; ergot alkaloid biosynthesis. Catalase; part of the gene cluster that mediates the biosynthesis of fungal ergot alkaloid. DmaW catalyzes the first step of ergot alkaloid biosynthesis by condensing dimethylallyl diphosphate (DMAP) and tryptophan to form 4-dimethylallyl-L-tryptophan. The second step is catalyzed by the methyltransferase easF that methylates 4-dimethylallyl-L-tryptophan in the presence of S-adenosyl-L-methionine, resulting in the formation of 4-dimethylallyl-L-abrine. The catalase easC and the FAD-dependent oxidoreductase easE then transform 4-dimethylallyl-L-abrine to chanoclavine-I which is further oxidized by easD in the presence of NAD(+), resulting in the formation of chanoclavine-I aldehyde. Agroclavine dehydrogenase easG then mediates the conversion of chanoclavine-I aldehyde to agroclavine via a non-enzymatic adduct reaction: the substrate is an iminium intermediate that is formed spontaneously from chanoclavine-I aldehyde in the presence of glutathione. The presence of easA is not required to complete this reaction. Further conversion of agroclavine to paspalic acid is a two-step process involving oxidation of agroclavine to elymoclavine and of elymoclavine to paspalic acid, the second step being performed by the elymoclavine oxidase cloA. Paspalic acid is then further converted to D-lysergic acid. Ergopeptines are assembled from D-lysergic acid and three different amino acids by the D-lysergyl-peptide-synthetases composed each of a monomudular and a trimodular nonribosomal peptide synthetase subunit. LpsB and lpsC encode the monomodular subunits responsible for D-lysergic acid activation and incorporation into the ergopeptine backbone. LpsA1 and A2 subunits encode the trimodular nonribosomal peptide synthetase assembling the tripeptide portion of ergopeptines. LpsA1 is responsible for formation of the major ergopeptine, ergotamine, and lpsA2 for alpha-ergocryptine, the minor ergopeptine of the total alkaloid mixture elaborated by C.purpurea. D-lysergyl-tripeptides are assembled by the nonribosomal peptide synthetases and released as N-(D-lysergyl-aminoacyl)-lactams. Cyclolization of the D-lysergyl-tripeptides is performed by the Fe(2+)/2-ketoglutarate-dependent dioxygenase easH which introduces a hydroxyl group into N-(D-lysergyl-aminoacyl)-lactam at alpha-C of the aminoacyl residue followed by spontaneous condensation with the terminal lactam carbonyl group. The chain is Catalase easC from Claviceps purpurea (Ergot fungus).